Reading from the N-terminus, the 251-residue chain is MILYEYPFNERIRTLLRLEDLFERFTFFLTQEDAREHHVALTTLFEISEVAGRADLKSDLMKELERQRQTLAPFRGNPGIEQSALEAVLGEIEQTLAGLSQMQGKTGQHLADNEWLASIRSRAIIPGGTCKFDLPSYYAWQQIHPDQRRQDIAKWVTPLLPLRDAAIIVLRLARESGQASKVMAMQGSYQQMLSGRSYQLMQVRVAPELRVIPEASANKYMLWVRFTVQDGDLRPRAVDVDVPFQLTLCSL.

The protein belongs to the ZapD family. In terms of assembly, interacts with FtsZ.

The protein resides in the cytoplasm. Functionally, cell division factor that enhances FtsZ-ring assembly. Directly interacts with FtsZ and promotes bundling of FtsZ protofilaments, with a reduction in FtsZ GTPase activity. In Paraburkholderia phytofirmans (strain DSM 17436 / LMG 22146 / PsJN) (Burkholderia phytofirmans), this protein is Cell division protein ZapD.